The sequence spans 329 residues: MGRAPCCDKTKVKRGPWSPEEDSKLRDYIEKYGNGGNWISFPLKAGLRRCGKSCRLRWLNYLRPNIKHGDFSEEEDRIIFSLFAAIGSRWSIIAAHLPGRTDNDIKNYWNTKLRKKLLSSSSDSSSSAMASPYLNPISQDVKRPTSPTTIPSSSYNPYAENPNQYPTKSLISSINGFEAGDKQIISYINPNYPQDLYLSDSNNNTSNANGFLLNHNMCDQYKNHTSFSSDVNGIRSEIMMKQEEIMMMMMIDHHIDQRTKGYNGEFTQGYYNYYNGHGDLKQMISGTGTNSNINMGGSGSSSSSISNLAENKSSGSLLLEYKCLPYFYS.

HTH myb-type domains are found at residues 9 to 62 (KTKV…LNYL) and 63 to 117 (RPNI…RKKL). DNA-binding regions (H-T-H motif) lie at residues 38–62 (WISFPLKAGLRRCGKSCRLRWLNYL) and 90–113 (WSIIAAHLPGRTDNDIKNYWNTKL). Low complexity-rich tracts occupy residues 122 to 131 (SDSSSSAMAS) and 144 to 154 (PTSPTTIPSSS). A disordered region spans residues 122 to 162 (SDSSSSAMASPYLNPISQDVKRPTSPTTIPSSSYNPYAENP).

In terms of tissue distribution, mostly expressed in roots. Also present in shoot tips and flower buds.

Its subcellular location is the nucleus. Its function is as follows. Transcription activator of genes involved in the regulation of meristematic competence, such as CUC2. Positively regulates axillary meristems (AMs) formation and development, especially at early phases of vegetative growth, probably by specifying a stem cell niche for AM formation. Modulates the negative regulation mediated by gibberellic acid on the timing of developmental phase transitions. In Arabidopsis thaliana (Mouse-ear cress), this protein is Transcription factor RAX1 (RAX1).